We begin with the raw amino-acid sequence, 294 residues long: Ankyrin repeat and SOCS box protein 9 (294 aa).

An N-acetylmethionine modification is found at Met-1. ANK repeat units follow at residues 35–64 (SDWSPMHEAAIHGHQLSLRNLISQGWAVNI), 68–97 (DHVSPLHEACLGGHLSCVKILLKHGAQVNG), 101–130 (DWHTPLFNACVSGSWDCVNLLLQHGASVQP), 133–162 (DLASPIHEAARRGHVECVNSLIAYGGNIDH), 166–195 (HLGTPLYLACENQQRACVKKLLESGADVNQ), and 198–227 (GQDSPLHAVARTASEELACLLMDFGADTQA). Ser-51 is subject to Phosphoserine. One can recognise an SOCS box domain in the interval 240-294 (PPESPLAQLFLEREGPPSLMQLCRLRIRKCFGIQQHHKITKLVLPEDLKQFLLHL).

Belongs to the ankyrin SOCS box (ASB) family. In terms of assembly, substrate-recognition component of the ECS(ASB9) complex, composed of ASB9, CUL5, ELOB, ELOC and RNF7/RBX2. Predominantly expressed in testis, kidney, and liver.

It is found in the mitochondrion. Its pathway is protein modification; protein ubiquitination. In terms of biological role, substrate-recognition component of a cullin-5-RING E3 ubiquitin-protein ligase complex (ECS complex, also named CRL5 complex), which mediates the ubiquitination and subsequent proteasomal degradation of target proteins. The ECS(ASB9) complex catalyzes ubiquitination of creatine kinases CKB and CKMT1A. Does not interact with the Elongin BC complex, likely to be a negative regulator of isoform 1. This is Ankyrin repeat and SOCS box protein 9 from Homo sapiens (Human).